A 1052-amino-acid polypeptide reads, in one-letter code: Membrane-bound transcription factor site-1 protease (1052 aa).

The N-terminal stretch at 1–17 (MKLINIWLLLLVVLLCG) is a signal peptide. Residues 18-186 (KKHLGDRLGK…TGRHSSRRLL (169 aa)) constitute a propeptide that is removed on maturation. Asparagine 148 carries N-linked (GlcNAc...) asparagine glycosylation. At serine 168 the chain carries Phosphoserine. Residues 187-999 (RAIPRQVAQT…MPGRYNQEVG (813 aa)) lie on the Lumenal side of the membrane. The Peptidase S8 domain occupies 190–472 (PRQVAQTLQA…HGKLDLLRAY (283 aa)). Aspartate 218 acts as the Charge relay system in catalysis. The N-linked (GlcNAc...) asparagine glycan is linked to asparagine 236. Residue histidine 249 is the Charge relay system of the active site. Residue asparagine 305 is glycosylated (N-linked (GlcNAc...) asparagine). Serine 414 (charge relay system) is an active-site residue. Asparagine 515 and asparagine 728 each carry an N-linked (GlcNAc...) asparagine glycan. A compositionally biased stretch (polar residues) spans 877–887 (PSLSHSGNRQR). The disordered stretch occupies residues 877-900 (PSLSHSGNRQRPPSGAGLAPPERM). Asparagine 939 is a glycosylation site (N-linked (GlcNAc...) asparagine). The chain crosses the membrane as a helical span at residues 1000–1022 (QTIPVFAFLGAMVALAFFVVQIS). Topologically, residues 1023 to 1052 (KAKSRPKRRRPRAKRPQLTQQTHPPRTPSV) are cytoplasmic. A compositionally biased stretch (basic residues) spans 1025-1037 (KSRPKRRRPRAKR). The disordered stretch occupies residues 1025–1052 (KSRPKRRRPRAKRPQLTQQTHPPRTPSV).

Belongs to the peptidase S8 family. Ca(2+) serves as cofactor. Post-translationally, the 148 kDa zymogen is processed progressively into two membrane-bound 120 and 106 kDa forms in the endoplasmic reticulum, and late into a secreted 98 kDa form. The propeptide is autocatalytically removed through an intramolecular cleavage after Leu-186. Further cleavage generates 14, 10, and 8 kDa intermediates.

The protein resides in the endoplasmic reticulum membrane. Its subcellular location is the golgi apparatus membrane. The catalysed reaction is Processes precursors containing basic and hydrophobic/aliphatic residues at P4 and P2, respectively, with a relatively relaxed acceptance of amino acids at P1 and P3.. Inhibited by divalent copper and zinc ions, but not by nickel or cobalt. Inhibited by its prosegment, but not smaller fragments. Inhibited by 4-(2-aminoethyl)benzenesulfonyl fluoride (AEBSF), a serine protease inhibitor. Functionally, serine protease that cleaves after hydrophobic or small residues, provided that Arg or Lys is in position P4: known substrates include SREBF1/SREBP1, SREBF2/SREBP2, BDNF, GNPTAB, ATF6, ATF6B and FAM20C. Cleaves substrates after Arg-Ser-Val-Leu (SREBP2), Arg-His-Leu-Leu (ATF6), Arg-Gly-Leu-Thr (BDNF) and its own propeptide after Arg-Arg-Leu-Leu. Catalyzes the first step in the proteolytic activation of the sterol regulatory element-binding proteins (SREBPs) SREBF1/SREBP1 and SREBF2/SREBP2. Also mediates the first step in the proteolytic activation of the cyclic AMP-dependent transcription factor ATF-6 (ATF6 and ATF6B). Mediates the protein cleavage of GNPTAB into subunit alpha and beta, thereby participating in biogenesis of lysosomes. Cleaves the propeptide from FAM20C which is required for FAM20C secretion from the Golgi apparatus membrane and for enhancement of FAM20C kinase activity, promoting osteoblast differentiation and biomineralization. Involved in the regulation of M6P-dependent Golgi-to-lysosome trafficking of lysosomal enzymes. It is required for the activation of CREB3L2/BBF2H7, a transcriptional activator of MIA3/TANGO and other genes controlling mega vesicle formation. Therefore, it plays a key role in the regulation of mega vesicle-mediated collagen trafficking. In astrocytes and osteoblasts, upon DNA damage and ER stress, mediates the first step of the regulated intramembrane proteolytic activation of the transcription factor CREB3L1, leading to the inhibition of cell-cycle progression. The protein is Membrane-bound transcription factor site-1 protease of Cricetulus griseus (Chinese hamster).